The following is a 487-amino-acid chain: Betaine aldehyde dehydrogenase 1 (487 aa).

Positions 26, 27, and 93 each coordinate K(+). An NAD(+)-binding site is contributed by 150-152 (GAW). Lysine 162 functions as the Charge relay system in the catalytic mechanism. NAD(+) contacts are provided by residues 176–179 (KPSE) and 229–232 (SVPT). Leucine 244 contacts K(+). Glutamate 250 acts as the Proton acceptor in catalysis. NAD(+) contacts are provided by glycine 252, cysteine 284, and glutamate 384. Residue cysteine 284 is the Nucleophile of the active site. Cysteine 284 is subject to Cysteine sulfenic acid (-SOH). Positions 454 and 457 each coordinate K(+). Glutamate 461 serves as the catalytic Charge relay system.

The protein belongs to the aldehyde dehydrogenase family. In terms of assembly, dimer of dimers. K(+) is required as a cofactor.

It carries out the reaction betaine aldehyde + NAD(+) + H2O = glycine betaine + NADH + 2 H(+). It participates in amine and polyamine biosynthesis; betaine biosynthesis via choline pathway; betaine from betaine aldehyde: step 1/1. Its function is as follows. Involved in the biosynthesis of the osmoprotectant glycine betaine. Catalyzes the irreversible oxidation of betaine aldehyde to the corresponding acid. In Rhizobium meliloti (strain 1021) (Ensifer meliloti), this protein is Betaine aldehyde dehydrogenase 1.